An 873-amino-acid chain; its full sequence is Paramyosin (873 aa).

The nonhelical region stretch occupies residues 1–25 (MSSRSSKYMYKSSGGAGDISIEYGT). Residues 26–852 (DLGALTRLED…IRAKHRSWVT (827 aa)) adopt a coiled-coil conformation. Residues 853 to 873 (TSQVPGGTRQVFVTEESSQNF) are nonhelical region.

The protein belongs to the paramyosin family. Homodimer. Binds IgG and collagen. In terms of tissue distribution, expressed in all tissues except in saliva.

The protein localises to the cytoplasm. It localises to the myofibril. Its function is as follows. Paramyosin is a major structural component of many thick filaments isolated from invertebrate muscles. The protein is Paramyosin (PRM) of Rhipicephalus microplus (Cattle tick).